We begin with the raw amino-acid sequence, 179 residues long: Large ribosomal subunit protein uL5 (179 aa).

Belongs to the universal ribosomal protein uL5 family. Part of the 50S ribosomal subunit; part of the 5S rRNA/L5/L18/L25 subcomplex. Contacts the 5S rRNA and the P site tRNA. Forms a bridge to the 30S subunit in the 70S ribosome.

Its function is as follows. This is one of the proteins that bind and probably mediate the attachment of the 5S RNA into the large ribosomal subunit, where it forms part of the central protuberance. In the 70S ribosome it contacts protein S13 of the 30S subunit (bridge B1b), connecting the 2 subunits; this bridge is implicated in subunit movement. Contacts the P site tRNA; the 5S rRNA and some of its associated proteins might help stabilize positioning of ribosome-bound tRNAs. The chain is Large ribosomal subunit protein uL5 from Deinococcus geothermalis (strain DSM 11300 / CIP 105573 / AG-3a).